The chain runs to 501 residues: Ribose import ATP-binding protein RbsA (501 aa).

ABC transporter domains are found at residues 8–245 and 255–500; these read LKMV…VGRT and VKKG…VGIN. 40-47 is an ATP binding site; it reads GENGAGKS.

This sequence belongs to the ABC transporter superfamily. Ribose importer (TC 3.A.1.2.1) family. The complex is composed of an ATP-binding protein (RbsA), two transmembrane proteins (RbsC) and a solute-binding protein (RbsB).

The protein localises to the cell membrane. It carries out the reaction D-ribose(out) + ATP + H2O = D-ribose(in) + ADP + phosphate + H(+). In terms of biological role, part of the ABC transporter complex RbsABC involved in ribose import. Responsible for energy coupling to the transport system. This Clostridium perfringens (strain SM101 / Type A) protein is Ribose import ATP-binding protein RbsA.